Reading from the N-terminus, the 452-residue chain is MEFQAVVMAVGGGSRMTDLTSSIPKPLLPVGNKPLIWYPLNLLERVGFEEVIVVTTRDVQKALCAEFKMKMKPDIVCIPDDADMGTADSLRYIYPKLKTDVLVLSCDLITDVALHEVVDLFRAYDASLAMLMRKGQDSIEPVPGQKGKKKAVEQRDFIGVDSTGKRLLFMANEADLDEELVIKGSILQKHPRIRFHTGLVDAHLYCLKKYIVDFLMENGSITSIRSELIPYLVRKQFSSASSQQGQEEKEEDLKKKELKSLDIYSFIKEANTLNLAPYDACWNACRGDRWEDLSRSQVRCYVHIMKEGLCSRVSTLGLYMEANRQVPKLLSALCPEEPPVHSSAQIVSKHLVGVDSLIGPETQIGEKSSIKRSVIGSSCLIKDRVTITNCLLMNSVTVEEGSNIQGSVICNNAVIEKGADIKDCLIGSGQRIEAKAKRVNEVIVGNDQLMEI.

An N-acetylmethionine modification is found at M1. S260 carries the phosphoserine modification.

The protein belongs to the eIF-2B gamma/epsilon subunits family. Component of the translation initiation factor 2B (eIF2B) complex which is a heterodecamer of two sets of five different subunits: alpha, beta, gamma, delta and epsilon. Subunits alpha, beta and delta comprise a regulatory subcomplex and subunits epsilon and gamma comprise a catalytic subcomplex. Within the complex, the hexameric regulatory complex resides at the center, with the two heterodimeric catalytic subcomplexes bound on opposite sides.

The protein resides in the cytoplasm. Its subcellular location is the cytosol. Its activity is regulated as follows. Activated by the chemical integrated stress response (ISR) inhibitor ISRIB which stimulates guanine nucleotide exchange factor activity for both phosphorylated and unphosphorylated eIF2. Acts as a component of the translation initiation factor 2B (eIF2B) complex, which catalyzes the exchange of GDP for GTP on the eukaryotic initiation factor 2 (eIF2) complex gamma subunit. Its guanine nucleotide exchange factor activity is repressed when bound to eIF2 complex phosphorylated on the alpha subunit, thereby limiting the amount of methionyl-initiator methionine tRNA available to the ribosome and consequently global translation is repressed. The polypeptide is Translation initiation factor eIF2B subunit gamma (EIF2B3) (Homo sapiens (Human)).